The following is a 284-amino-acid chain: Transmembrane protein 163b (284 aa).

Residues 1–44 (MTDSSSASDPTAGPVDPGPAPSAPDPALEDPASTPANGHHPNQA) are disordered. The Cytoplasmic portion of the chain corresponds to 1 to 83 (MTDSSSASDP…HEAQSYRKKA (83 aa)). Residues 84 to 104 (LWVSWVSIVVTMILAIAAFTV) form a helical membrane-spanning segment. Topologically, residues 105 to 111 (SIMRHSA) are extracellular. A helical membrane pass occupies residues 112-132 (SAFGFAFDATLDVLSSIIVLW). At 133 to 145 (RYSNAAAVHSAHR) the chain is on the cytoplasmic side. A helical transmembrane segment spans residues 146 to 166 (EYIACVILGVVFILSAITILV). The Extracellular portion of the chain corresponds to 167 to 182 (KAIHDLATKLEPEVDD). The chain crosses the membrane as a helical span at residues 183–203 (FLYSVSVISGVVCTVLCVCKF). Over 204–212 (MLGKVLTSR) the chain is Cytoplasmic. The helical transmembrane segment at 213-233 (ALITDGFNSLVGGVMGFSILI) threads the bilayer. At 234 to 243 (SAEVFKHEPS) the chain is on the extracellular side. The helical transmembrane segment at 244 to 264 (VWFLDGTIGILIGLIILAYGV) threads the bilayer. The Cytoplasmic segment spans residues 265 to 284 (KLLKDMVPRIRQTRHYERFE).

The protein belongs to the TMEM163 family.

It localises to the cytoplasmic vesicle. The protein resides in the secretory vesicle. It is found in the synaptic vesicle membrane. Its subcellular location is the early endosome membrane. The protein localises to the late endosome membrane. It localises to the lysosome membrane. The protein resides in the cell membrane. The enzyme catalyses Zn(2+)(in) = Zn(2+)(out). Its function is as follows. Zinc ion transporter that mediates zinc efflux and plays a crucial role in intracellular zinc homeostasis. Binds the divalent cations Zn(2+), Ni(2+), and to a minor extent Cu(2+). Is a functional modulator of P2X purinoceptors, including P2RX1, P2RX3, P2RX4 and P2RX7. Plays a role in central nervous system development and is required for myelination, and survival and proliferation of oligodendrocytes. The polypeptide is Transmembrane protein 163b (Danio rerio (Zebrafish)).